Here is a 158-residue protein sequence, read N- to C-terminus: Na(+)/H(+) antiporter subunit E (158 aa).

2 helical membrane-spanning segments follow: residues 21–41 (SPSA…LFFF) and 51–71 (LWKL…LYLA).

Belongs to the CPA3 antiporters (TC 2.A.63) subunit E family. As to quaternary structure, forms a heterooligomeric complex that consists of seven subunits: MrpA, MrpB, MrpC, MrpD, MrpE, MrpF and MrpG.

It localises to the cell membrane. Mrp complex is a Na(+)/H(+) antiporter that is considered to be the major Na(+) excretion system in B.subtilis. Has a major role in Na(+) resistance and a minor role in Na(+)- and K(+)-dependent pH homeostasis as compared to TetB. MrpA may be the actual Na(+)/H(+) antiporter, although the six other Mrp proteins are all required for Na(+)/H(+) antiport activity and Na(+) resistance. MrpA is required for initiation of sporulation when external Na(+) concentration increases. Also transports Li(+) but not K(+), Ca(2+) or Mg(2+). In Bacillus subtilis (strain 168), this protein is Na(+)/H(+) antiporter subunit E (mrpE).